The following is a 219-amino-acid chain: Proteasome subunit beta type-9 (219 aa).

Positions 1–20 (MLRTGAPNGDLPRAGEVHTG) are cleaved as a propeptide — removed in mature form. T21 (nucleophile) is an active-site residue. 2 positions are modified to N6-acetyllysine: K53 and K109.

It belongs to the peptidase T1B family. As to quaternary structure, the 26S proteasome consists of a 20S proteasome core and two 19S regulatory subunits. The 20S proteasome core is composed of 28 subunits that are arranged in four stacked rings, resulting in a barrel-shaped structure. The two end rings are each formed by seven alpha subunits, and the two central rings are each formed by seven beta subunits. The catalytic chamber with the active sites is on the inside of the barrel. Component of the immunoproteasome, where it displaces the equivalent housekeeping subunit PSMB6. Component of the spermatoproteasome, a form of the proteasome specifically found in testis. Autocleaved. The resulting N-terminal Thr residue of the mature subunit is responsible for the nucleophile proteolytic activity.

Its subcellular location is the cytoplasm. It localises to the nucleus. It catalyses the reaction Cleavage of peptide bonds with very broad specificity.. The proteasome is a multicatalytic proteinase complex which is characterized by its ability to cleave peptides with Arg, Phe, Tyr, Leu, and Glu adjacent to the leaving group at neutral or slightly basic pH. The proteasome has an ATP-dependent proteolytic activity. This subunit is involved in antigen processing to generate class I binding peptides. The polypeptide is Proteasome subunit beta type-9 (PSMB9) (Bos taurus (Bovine)).